Here is a 551-residue protein sequence, read N- to C-terminus: Endolytic murein transglycosylase (551 aa).

The Cytoplasmic segment spans residues 1-187 (MSEKSREEEK…PKKEKKSHVK (187 aa)). The segment at 38–180 (VRTPANEPSA…EGAKPAKPKK (143 aa)) is disordered. 2 stretches are compositionally biased toward low complexity: residues 100–110 (PSSPAEESGSR) and 145–157 (QAGPETPTPATET). Residues 159–174 (DIIRDTSRRSRREGAK) are compositionally biased toward basic and acidic residues. A helical membrane pass occupies residues 188 to 208 (AFVISFLVFLALLSAGGYFGY). At 209–551 (QYVLDSLLPI…VAEHVNSKLN (343 aa)) the chain is on the extracellular side.

It belongs to the transglycosylase MltG family.

It localises to the cell membrane. The enzyme catalyses a peptidoglycan chain = a peptidoglycan chain with N-acetyl-1,6-anhydromuramyl-[peptide] at the reducing end + a peptidoglycan chain with N-acetylglucosamine at the non-reducing end.. Functionally, functions as a peptidoglycan terminase that cleaves nascent peptidoglycan strands endolytically to terminate their elongation. Involved in peripheral peptidoglycan (PG) synthesis. The sequence is that of Endolytic murein transglycosylase from Streptococcus pneumoniae serotype 2 (strain D39 / NCTC 7466).